A 70-amino-acid chain; its full sequence is Mu-conotoxin PnIVB (70 aa).

The signal sequence occupies residues 1-20 (MMSKLGVLLIICLLLCPLTA). Positions 21 to 51 (VPQDGDQPADQPAERMQDDISSEHHPFFDPV) are excised as a propeptide.

In terms of processing, contains 3 disulfide bonds. They are not added, since framework IV presents two different connectivities (I-V, II-III, IV-VI and I-III, II-V, IV-VI). In terms of tissue distribution, expressed by the venom duct.

The protein localises to the secreted. Mu-conotoxins block voltage-gated sodium channels (Nav). Blocks reversibly sodium channels in molluskan neurons, but has no effect on sodium currents in bovine chromaffin cells or in rat brain synaptosomes. Induces paralysis in bivalve mollusks (Mytilus). No effect are observed on fish (Gambusia) and fly larvae (Sarcophaga). Is approximately 6 times more potent than PnIVA in blockade of the sodium current in Lymnaea neurons. This is Mu-conotoxin PnIVB from Conus pennaceus (Feathered cone).